The primary structure comprises 179 residues: Large ribosomal subunit protein uL6 (179 aa).

It belongs to the universal ribosomal protein uL6 family. In terms of assembly, part of the 50S ribosomal subunit.

Its function is as follows. This protein binds to the 23S rRNA, and is important in its secondary structure. It is located near the subunit interface in the base of the L7/L12 stalk, and near the tRNA binding site of the peptidyltransferase center. This chain is Large ribosomal subunit protein uL6, found in Trichlorobacter lovleyi (strain ATCC BAA-1151 / DSM 17278 / SZ) (Geobacter lovleyi).